A 291-amino-acid chain; its full sequence is Orotidine 5'-phosphate decarboxylase (291 aa).

Lysine 97 (proton donor) is an active-site residue.

It belongs to the OMP decarboxylase family. Type 2 subfamily.

It catalyses the reaction orotidine 5'-phosphate + H(+) = UMP + CO2. It functions in the pathway pyrimidine metabolism; UMP biosynthesis via de novo pathway; UMP from orotate: step 2/2. This Clostridium kluyveri (strain ATCC 8527 / DSM 555 / NBRC 12016 / NCIMB 10680 / K1) protein is Orotidine 5'-phosphate decarboxylase.